Here is a 375-residue protein sequence, read N- to C-terminus: MVDNSEIRVVVGMSGGVDSSVSALLLKQQGFDVVGVFMKNWDDTDDSGVCTATEDYEDVKKVADEIGIPYYSINFEKDYWERVFEYFLNEYKKGRTPNPDVMCNKEIKFKSFLDFAMDLDADYIAMGHYAATKVDENGIVHMMRPKDGNKDQTYFLSQLSQDQLKKVIFPLANLTKPQVREIAIDAGLATAKKKDSTGICFIGERNFKKFLSEFLPAQSGKMVTPDGKVVGEHAGLMYYTIGQRSGLGLGSTKESTDPWFVVGKDLKKNELIVEQGYDSKLLYATSLDASGVSFFTGQPEHDIDLKCTAKFRYRQPDVGVTMHYHAKDNTVHVEFDEPARAVTPGQAIVFYNGEECLGGATIDRAYQNEKQLQLV.

Residues 12-19 (GMSGGVDS) and Met-38 contribute to the ATP site. Positions 98-100 (NPD) are interaction with target base in tRNA. Catalysis depends on Cys-103, which acts as the Nucleophile. The cysteines at positions 103 and 200 are disulfide-linked. Position 127 (Gly-127) interacts with ATP. The segment at 150–152 (KDQ) is interaction with tRNA. Cys-200 serves as the catalytic Cysteine persulfide intermediate. The interval 312-313 (RY) is interaction with tRNA.

This sequence belongs to the MnmA/TRMU family.

It localises to the cytoplasm. It catalyses the reaction S-sulfanyl-L-cysteinyl-[protein] + uridine(34) in tRNA + AH2 + ATP = 2-thiouridine(34) in tRNA + L-cysteinyl-[protein] + A + AMP + diphosphate + H(+). Functionally, catalyzes the 2-thiolation of uridine at the wobble position (U34) of tRNA, leading to the formation of s(2)U34. The polypeptide is tRNA-specific 2-thiouridylase MnmA (Lactobacillus gasseri (strain ATCC 33323 / DSM 20243 / BCRC 14619 / CIP 102991 / JCM 1131 / KCTC 3163 / NCIMB 11718 / NCTC 13722 / AM63)).